A 162-amino-acid chain; its full sequence is Phospholipase A and acyltransferase 3 (162 aa).

Residues 1–133 (MLAPIPEPKP…VPRSDQVRDA (133 aa)) are Cytoplasmic-facing. The LRAT domain occupies 13 to 129 (LIEIFRPMYR…LRYGVPRSDQ (117 aa)). Catalysis depends on residues His23 and His35. Residue Cys113 is the Acyl-thioester intermediate of the active site. Residues 134-154 (VKAVGIAGVGLAALGLVGVML) form a helical membrane-spanning segment. At 155-162 (SRNKKQKQ) the chain is on the lumenal side.

The protein belongs to the H-rev107 family. In terms of assembly, interacts with PPP2R1A; this interaction might decrease PP2A activity. As to expression, ubiquitously expressed in normal tissues but down-regulated in primary carcinomas or in many cell lines derived from tumors. Highly expressed in white adipose tissue and in adipocytes. Expressed at lower levels in brown adipose tissue.

The protein resides in the cell membrane. Its subcellular location is the cytoplasm. The protein localises to the cytosol. It is found in the perinuclear region. It localises to the peroxisome membrane. The protein resides in the mitochondrion membrane. Its subcellular location is the nucleus envelope. The protein localises to the lysosome membrane. It is found in the endoplasmic reticulum membrane. It carries out the reaction a 1,2-diacyl-sn-glycero-3-phosphocholine + H2O = a 1-acyl-sn-glycero-3-phosphocholine + a fatty acid + H(+). The enzyme catalyses a 1,2-diacyl-sn-glycero-3-phosphocholine + H2O = a 2-acyl-sn-glycero-3-phosphocholine + a fatty acid + H(+). It catalyses the reaction 1,2-dihexadecanoyl-sn-glycero-3-phosphocholine + H2O = 1-hexadecanoyl-sn-glycero-3-phosphocholine + hexadecanoate + H(+). The catalysed reaction is 1,2-dihexadecanoyl-sn-glycero-3-phosphocholine + H2O = 2-hexadecanoyl-sn-glycero-3-phosphocholine + hexadecanoate + H(+). It carries out the reaction 1-hexadecanoyl-2-(9Z-octadecenoyl)-sn-glycero-3-phosphocholine + H2O = 2-(9Z-octadecenoyl)-sn-glycero-3-phosphocholine + hexadecanoate + H(+). The enzyme catalyses 1-hexadecanoyl-2-(9Z-octadecenoyl)-sn-glycero-3-phosphocholine + H2O = 1-hexadecanoyl-sn-glycero-3-phosphocholine + (9Z)-octadecenoate + H(+). It catalyses the reaction 1-hexadecanoyl-2-(5Z,8Z,11Z,14Z-eicosatetraenoyl)-sn-glycero-3-phosphocholine + H2O = 1-hexadecanoyl-sn-glycero-3-phosphocholine + (5Z,8Z,11Z,14Z)-eicosatetraenoate + H(+). The catalysed reaction is 1-hexadecanoyl-2-(5Z,8Z,11Z,14Z-eicosatetraenoyl)-sn-glycero-3-phosphocholine + H2O = 2-(5Z,8Z,11Z,14Z)-eicosatetraenoyl-sn-glycero-3-phosphocholine + hexadecanoate + H(+). It carries out the reaction 1-hexadecanoyl-2-(9Z,12Z-octadecadienoyl)-sn-glycero-3-phosphoethanolamine + H2O = 1-hexadecanoyl-sn-glycero-3-phosphoethanolamine + (9Z,12Z)-octadecadienoate + H(+). The enzyme catalyses 1-hexadecanoyl-2-(9Z,12Z-octadecadienoyl)-sn-glycero-3-phosphoethanolamine + H2O = 2-(9Z,12Z)-octadecadienoyl-sn-glycero-3-phosphoethanolamine + hexadecanoate + H(+). It catalyses the reaction 1-hexadecanoyl-2-(5Z,8Z,11Z,14Z-eicosatetraenoyl)-sn-glycero-3-phosphoethanolamine + H2O = 1-hexadecanoyl-sn-glycero-3-phosphoethanolamine + (5Z,8Z,11Z,14Z)-eicosatetraenoate + H(+). The catalysed reaction is 1-hexadecanoyl-2-(5Z,8Z,11Z,14Z-eicosatetraenoyl)-sn-glycero-3-phosphoethanolamine + H2O = 2-(5Z,8Z,11Z,14Z)-eicosatetraenoyl-sn-glycero-3-phosphoethanolamine + hexadecanoate + H(+). It carries out the reaction 1-hexanoyl-2-acyl-sn-glycero-3-phosphocholine + H2O = hexanoate + a 2-acyl-sn-glycero-3-phosphocholine + H(+). The enzyme catalyses 1-hexanoyl-2-acyl-sn-glycero-3-phosphocholine + H2O = 1-hexanoyl-sn-glycero-3-phosphocholine + a fatty acid + H(+). It catalyses the reaction 1,2-diheptadecanoyl-sn-glycero-3-phosphoethanolamine + 1-(9Z-octadecenoyl)-2-hexadecanoyl-sn-glycero-3-phosphocholine = 1,2-diheptadecanoyl-sn-glycero-3-phospho-N-hexadecanoyl-ethanolamine + 1-(9Z-octadecenoyl)-sn-glycero-3-phosphocholine + H(+). The catalysed reaction is 1,2-diheptadecanoyl-sn-glycero-3-phosphoethanolamine + 1-(9Z-octadecenoyl)-2-hexadecanoyl-sn-glycero-3-phosphocholine = 1,2-diheptadecanoyl-sn-glycero-3-phospho-N-(9Z-octadecenoyl)-ethanolamine + 2-hexadecanoyl-sn-glycero-3-phosphocholine + H(+). It carries out the reaction 1,2-dihexanoyl-sn-glycero-3-phosphoethanolamine + 2-heptanoyl-sn-glycero-3-phosphocholine = hexanoyl-sn-glycero-3-phosphoethanolamine + 1-hexanoyl-2-heptanoyl-sn-glycero-3-phosphocholine. The enzyme catalyses 1-hexadecanoyl-2-octadecanoyl-sn-glycero-3-phosphocholine + H2O = octadecanoate + 1-hexadecanoyl-sn-glycero-3-phosphocholine + H(+). It catalyses the reaction 1-hexadecanoyl-2-octadecanoyl-sn-glycero-3-phosphocholine + H2O = 2-octadecanoyl-sn-glycero-3-phosphocholine + hexadecanoate + H(+). The catalysed reaction is 1-octadecanoyl-2-hexadecanoyl-sn-glycero-3-phosphocholine + H2O = 1-octadecanoyl-sn-glycero-3-phosphocholine + hexadecanoate + H(+). It carries out the reaction 1-octadecanoyl-2-hexadecanoyl-sn-glycero-3-phosphocholine + H2O = 2-hexadecanoyl-sn-glycero-3-phosphocholine + octadecanoate + H(+). The enzyme catalyses 1-hexadecanoyl-2-(9Z,12Z-octadecadienoyl)-sn-glycero-3-phosphocholine + H2O = (9Z,12Z)-octadecadienoate + 1-hexadecanoyl-sn-glycero-3-phosphocholine + H(+). It catalyses the reaction 1-hexadecanoyl-2-(9Z,12Z-octadecadienoyl)-sn-glycero-3-phosphocholine + H2O = 2-(9Z,12Z-octadecadienoyl)-sn-glycero-3-phosphocholine + hexadecanoate + H(+). The catalysed reaction is 1,2-di-(9Z-octadecenoyl)-sn-glycero-3-phosphocholine + H2O = 2-(9Z-octadecenoyl)-sn-glycero-3-phosphocholine + (9Z)-octadecenoate + H(+). It carries out the reaction 1,2-dihexadecanoyl-sn-glycero-3-phosphocholine + H2O = hexadecanoyl-sn-glycero-3-phosphocholine + hexadecanoate + H(+). The enzyme catalyses 1,2-di-(9Z-octadecenoyl)-sn-glycero-3-phosphocholine + H2O = 1-(9Z-octadecenoyl)-sn-glycero-3-phosphocholine + (9Z)-octadecenoate + H(+). It catalyses the reaction 1,2-di-(9Z-octadecenoyl)-sn-glycero-3-phosphoethanolamine + 1,2-dihexadecanoyl-sn-glycero-3-phosphocholine = hexadecanoyl-sn-glycero-3-phosphocholine + N-hexadecanoyl-1,2-di-(9Z-octadecenoyl)-sn-glycero-3-phosphoethanolamine + H(+). The catalysed reaction is 1,2-di-(9Z,12Z-octadecadienoyl)-sn-glycero-3-phosphocholine + H2O = 1-(9Z,12Z)-octadecadienoyl-sn-glycero-3-phosphocholine + (9Z,12Z)-octadecadienoate + H(+). Functionally, exhibits both phospholipase A1/2 and acyltransferase activities. Shows phospholipase A1 (PLA1) and A2 (PLA2), catalyzing the calcium-independent release of fatty acids from the sn-1 or sn-2 position of glycerophospholipids. For most substrates, PLA1 activity is much higher than PLA2 activity. Shows O-acyltransferase activity, catalyzing the transfer of a fatty acyl group from glycerophospholipid to the hydroxyl group of lysophospholipid. Shows N-acyltransferase activity,catalyzing the calcium-independent transfer of a fatty acyl group at the sn-1 position of phosphatidylcholine (PC) and other glycerophospholipids to the primary amine of phosphatidylethanolamine (PE), forming N-acylphosphatidylethanolamine (NAPE), which serves as precursor for N-acylethanolamines (NAEs). Exhibits high N-acyltransferase activity and low phospholipase A1/2 activity. Required for complete organelle rupture and degradation that occur during eye lens terminal differentiation, when fiber cells that compose the lens degrade all membrane-bound organelles in order to provide lens with transparency to allow the passage of light. Organelle membrane degradation is probably catalyzed by the phospholipase activity. Its function is as follows. (Microbial infection) Acts as a host factor for picornaviruses: required during early infection to promote viral genome release into the cytoplasm. This Mus musculus (Mouse) protein is Phospholipase A and acyltransferase 3.